A 338-amino-acid polypeptide reads, in one-letter code: Peroxidase 15 (338 aa).

An N-terminal signal peptide occupies residues 1-22 (MARIGSFLIILYLIYALTLCIC). 4 disulfide bridges follow: C45–C125, C78–C83, C131–C332, and C210–C242. H76 (proton acceptor) is an active-site residue. Positions 77, 80, 82, 84, and 86 each coordinate Ca(2+). Substrate is bound at residue P173. A glycan (N-linked (GlcNAc...) asparagine) is linked at N176. H203 lines the heme b pocket. T204 lines the Ca(2+) pocket. Residues N219 and N250 are each glycosylated (N-linked (GlcNAc...) asparagine). Positions 255, 258, and 263 each coordinate Ca(2+).

The protein belongs to the peroxidase family. Classical plant (class III) peroxidase subfamily. Heme b is required as a cofactor. Ca(2+) serves as cofactor.

It localises to the secreted. The catalysed reaction is 2 a phenolic donor + H2O2 = 2 a phenolic radical donor + 2 H2O. Functionally, removal of H(2)O(2), oxidation of toxic reductants, biosynthesis and degradation of lignin, suberization, auxin catabolism, response to environmental stresses such as wounding, pathogen attack and oxidative stress. These functions might be dependent on each isozyme/isoform in each plant tissue. This is Peroxidase 15 (PER15) from Arabidopsis thaliana (Mouse-ear cress).